We begin with the raw amino-acid sequence, 906 residues long: Transmembrane channel-like protein 2 (906 aa).

Positions 1 to 150 (MSHQVKGLKE…SASGGESLSE (150 aa)) are disordered. Residues 1–263 (MSHQVKGLKE…IFLRWMYGVN (263 aa)) are Cytoplasmic-facing. Positions 69–79 (PRRKQTGRRRH) are enriched in basic residues. The segment covering 80 to 127 (REELGEQERGEAERTCEGRRKRDERASFQERTAAPKREKEIPRREEKS) has biased composition (basic and acidic residues). Low complexity predominate over residues 135-147 (SSSLASSASGGES). Residues 264-284 (LVLFGLIFGLVIIPEVLMGMP) form a helical membrane-spanning segment. Topologically, residues 285 to 336 (YGSIPRKTVPRAEEEKAMDFSVLWDFEGYIKYSALFYGYYNNQRTIGWLRYR) are extracellular. The helical transmembrane segment at 337 to 357 (LPMAYFMVGVSVFGYSLIIVI) threads the bilayer. Residues 358-431 (RSMASNTQGS…NIHLTRFLRV (74 aa)) are Cytoplasmic-facing. A helical membrane pass occupies residues 432-452 (LANFLIICCLCGSGYLIYFVV). The Extracellular segment spans residues 453 to 508 (KRSQQFSKMQNVSWYERNEVEIVMSLLGMFCPPLFETIAALENYHPRTGLKWQLGR). The helical transmembrane segment at 509–529 (IFALFLGNLYTFLLALMDDVH) threads the bilayer. Over 530–693 (LKLANEETIK…RVFKASRSNN (164 aa)) the chain is Cytoplasmic. Residues 694–714 (FYMGLLLLVLFLSLLPVAYTI) form a helical membrane-spanning segment. Residues 715 to 750 (MSLPPSFDCGPFSGKNRMYDVLQETIENDFPTFLGK) lie on the Extracellular side of the membrane. A helical membrane pass occupies residues 751-771 (IFAFLANPGLIIPAILLMFLA). The Cytoplasmic portion of the chain corresponds to 772-906 (IYYLNSVSKS…SGKSAQRPPH (135 aa)). The interval 800-906 (EKSHKSVKGK…SGKSAQRPPH (107 aa)) is disordered. Composition is skewed to polar residues over residues 820–846 (KSSS…QSQA), 854–866 (PGTS…TTLP), and 886–900 (APSQ…SGKS).

Belongs to the TMC family. In terms of assembly, forms the MET channel composed of TMC dimer (TMC1 or TMC2), TMIE, TOMT, CIB (CIB2 or CIB3), LHFPL5 and PDH15. The interaction of TMC1 and TMC2 with TOMT is required for the transportation of TMC1/2 into the stereocilia of hair cells. Interacts (via N-terminus) with both isoforms CD1 and CD3 of PCDH15. Can form a heterodimer with TMC1, TMC5 or TMC7. Detected in fetal cochlea.

It is found in the cell membrane. It carries out the reaction Ca(2+)(in) = Ca(2+)(out). Functionally, pore-forming subunit of the mechanotransducer (MET) non-selective cation channel complex located at the tips of stereocilia of cochlear hair cells and that mediates sensory transduction in the auditory system. The MET complex is composed of two dimeric pore-forming ion-conducting transmembrane TMC (TMC1 or TMC2) subunits, and aided by several auxiliary proteins including LHFPL5, TMIE, CIB2/3 and TOMT, and the tip-link PCDH15. MET channel is activated by tension in the tip-link extending from the side wall of one stereocilium to the tip of the adjacent shorter stereocilium, where the channel is located. TMC2 MET channel is highly permeable to calcium and likely transports monovalent cations. Also involved in vestibular hair cell transduction current of the mammalian inner ear. This chain is Transmembrane channel-like protein 2, found in Homo sapiens (Human).